The sequence spans 147 residues: UPF0306 protein YhbP (147 aa).

This sequence belongs to the UPF0306 family.

This Escherichia coli (strain K12 / MC4100 / BW2952) protein is UPF0306 protein YhbP.